Consider the following 358-residue polypeptide: Chorismate synthase (358 aa).

Arg-47 contacts NADP(+). Residues 124–126, 240–241, Gly-284, 299–303, and Arg-325 contribute to the FMN site; these read RSS, NA, and KPIAT.

The protein belongs to the chorismate synthase family. In terms of assembly, homotetramer. FMNH2 serves as cofactor.

The enzyme catalyses 5-O-(1-carboxyvinyl)-3-phosphoshikimate = chorismate + phosphate. The protein operates within metabolic intermediate biosynthesis; chorismate biosynthesis; chorismate from D-erythrose 4-phosphate and phosphoenolpyruvate: step 7/7. Its function is as follows. Catalyzes the anti-1,4-elimination of the C-3 phosphate and the C-6 proR hydrogen from 5-enolpyruvylshikimate-3-phosphate (EPSP) to yield chorismate, which is the branch point compound that serves as the starting substrate for the three terminal pathways of aromatic amino acid biosynthesis. This reaction introduces a second double bond into the aromatic ring system. The protein is Chorismate synthase of Bacteroides thetaiotaomicron (strain ATCC 29148 / DSM 2079 / JCM 5827 / CCUG 10774 / NCTC 10582 / VPI-5482 / E50).